The chain runs to 246 residues: Neuromodulin (246 aa).

The tract at residues 1–246 (MLCCMRRTKQ…EESKADQENA (246 aa)) is disordered. S-palmitoyl cysteine attachment occurs at residues cysteine 3 and cysteine 4. Residues 9–33 (KQVEKNEDGDQKIEQDGIKPEDKAH) show a composition bias toward basic and acidic residues. Positions 32-61 (AHKAATKIQASFRGHITRKKLKGEKKADAP) constitute an IQ domain. 2 stretches are compositionally biased toward low complexity: residues 87 to 99 (ASAA…ADSA) and 125 to 157 (SEQP…KAST). The span at 164-176 (KADEAQDKEEPKQ) shows a compositional bias: basic and acidic residues. Over residues 177 to 203 (ADVPAADTTATTTPAAEDATAKATAQP) the composition is skewed to low complexity. Basic and acidic residues-rich tracts occupy residues 213 to 225 (TEEK…ETKP) and 237 to 246 (EESKADQENA).

This sequence belongs to the neuromodulin family. As to quaternary structure, binds calmodulin with a greater affinity in the absence of Ca(2+) than in its presence. In terms of processing, palmitoylated. Palmitoylation is essential for plasma membrane association. Expressed in neurons.

It is found in the cell membrane. The protein resides in the cell projection. Its subcellular location is the growth cone membrane. It localises to the synapse. The protein localises to the filopodium membrane. In terms of biological role, this protein is associated with nerve growth. It is a major component of the motile 'growth cones' that form the tips of elongating axons. Plays a role in axonal and dendritic filopodia induction. The protein is Neuromodulin (GAP43) of Gallus gallus (Chicken).